A 153-amino-acid polypeptide reads, in one-letter code: Small ribosomal subunit protein uS13 (153 aa).

The segment at 134 to 153 (GQRTKSNGRRGRSMGVSRKK) is disordered.

The protein belongs to the universal ribosomal protein uS13 family.

It is found in the cytoplasm. Located at the top of the head of the 40S subunit, it contacts several helices of the 18S rRNA. The polypeptide is Small ribosomal subunit protein uS13 (RPS18) (Encephalitozoon cuniculi (strain GB-M1) (Microsporidian parasite)).